The primary structure comprises 468 residues: ATP synthase subunit beta (468 aa).

155–162 (GGAGVGKT) provides a ligand contact to ATP.

This sequence belongs to the ATPase alpha/beta chains family. F-type ATPases have 2 components, CF(1) - the catalytic core - and CF(0) - the membrane proton channel. CF(1) has five subunits: alpha(3), beta(3), gamma(1), delta(1), epsilon(1). CF(0) has three main subunits: a(1), b(2) and c(9-12). The alpha and beta chains form an alternating ring which encloses part of the gamma chain. CF(1) is attached to CF(0) by a central stalk formed by the gamma and epsilon chains, while a peripheral stalk is formed by the delta and b chains.

Its subcellular location is the cell membrane. The catalysed reaction is ATP + H2O + 4 H(+)(in) = ADP + phosphate + 5 H(+)(out). Produces ATP from ADP in the presence of a proton gradient across the membrane. The catalytic sites are hosted primarily by the beta subunits. In Streptococcus pyogenes serotype M3 (strain ATCC BAA-595 / MGAS315), this protein is ATP synthase subunit beta.